The following is a 472-amino-acid chain: Divalent metal cation transporter MntH (472 aa).

Transmembrane regions (helical) follow at residues 59 to 79 (LLAF…PGNW), 92 to 112 (MLLS…ALAA), 136 to 156 (LALW…EVIG), 167 to 187 (VPII…LLLM), 196 to 216 (AFVI…IVLA), 233 to 253 (VVAD…TVMP), 288 to 308 (LALM…AAVF), 325 to 345 (LLAP…ALLA), 377 to 397 (VLTR…YGEQ), 402 to 422 (LLLL…IPLL), and 439 to 459 (WLMV…VKLL).

It belongs to the NRAMP family.

The protein resides in the cell inner membrane. In terms of biological role, h(+)-stimulated, divalent metal cation uptake system. This is Divalent metal cation transporter MntH from Xylella fastidiosa (strain 9a5c).